A 365-amino-acid chain; its full sequence is Histidinol-phosphate aminotransferase 2 (365 aa).

Lysine 222 is subject to N6-(pyridoxal phosphate)lysine.

It belongs to the class-II pyridoxal-phosphate-dependent aminotransferase family. Histidinol-phosphate aminotransferase subfamily. Homodimer. Pyridoxal 5'-phosphate serves as cofactor.

It carries out the reaction L-histidinol phosphate + 2-oxoglutarate = 3-(imidazol-4-yl)-2-oxopropyl phosphate + L-glutamate. It functions in the pathway amino-acid biosynthesis; L-histidine biosynthesis; L-histidine from 5-phospho-alpha-D-ribose 1-diphosphate: step 7/9. In Bordetella bronchiseptica (strain ATCC BAA-588 / NCTC 13252 / RB50) (Alcaligenes bronchisepticus), this protein is Histidinol-phosphate aminotransferase 2 (hisC2).